Consider the following 510-residue polypeptide: NEDD8-activating enzyme E1 regulatory subunit (510 aa).

Alanine 2 is modified (N-acetylalanine). N6-acetyllysine occurs at positions 6 and 317. The interval 307-320 is interaction with UBA3; the sequence is DMIADSGKYIKLQN.

Belongs to the ubiquitin-activating E1 family. ULA1 subfamily. In terms of assembly, heterodimer of UBA3 and NAE1. The complex binds NEDD8 and UBE2M. Binds APP and TP53BP2. Ubiquitinated by TRIP12, leading to its degradation by the proteasome.

The protein resides in the cell membrane. The protein operates within protein modification; protein neddylation. Binding of TP53BP2 to the regulatory subunit NAE1 decreases neddylation activity. Its function is as follows. Regulatory subunit of the dimeric UBA3-NAE1 E1 enzyme. E1 activates NEDD8 by first adenylating its C-terminal glycine residue with ATP, thereafter linking this residue to the side chain of the catalytic cysteine, yielding a NEDD8-UBA3 thioester and free AMP. E1 finally transfers NEDD8 to the catalytic cysteine of UBE2M. Necessary for cell cycle progression through the S-M checkpoint. Overexpression of NAE1 causes apoptosis through deregulation of NEDD8 conjugation. The covalent attachment of NEDD8 to target proteins is known as 'neddylation' and the process is involved in the regulation of cell growth, viability and development. This chain is NEDD8-activating enzyme E1 regulatory subunit (NAE1), found in Macaca fascicularis (Crab-eating macaque).